The following is a 505-amino-acid chain: MLRGNDTGSDLAELLWDNGAPAPLRPPPPPPFQPFTCSAAATTSPPAHDYLFIKNLMRGGGAANHHHHDDDDDDDDDVPWLHYHPVVDDDDDADADTAPLPPDYCAALLSGLSDHLPPPAAAASRVDPDPCSSSHGAVVPSTSAAAAKQARTSGGGGGGVMNFTFFSRPLQQRPSGGETASASASAAATSTVPVESTVVQAATNRLRSTPLFSDQRMAWLHPPKPSPRAAAPPPPPPLAPTTRHRLDTAAATATVAQRLPPSEARAPDAPPPAATATATTSSVCSGNGDRRQLNWRDSHNNQSAEWSASQDELDLDDELAGVHRRSAARSSKRSRTAEVHNLSERRRRDRINEKMRALQELIPNCNKIDKASMLEEAIEYLKTLQLQVQMMSMGTGMFVPPMMLPAAAAAMQHHHMQMQQMAGPMAAAAHFPHLGAAAAMGLAGFGMPAAAQFPCPMFPAAPPMSMFAPPPPPPPFPHAAATAVEQTPSPPGAADAGNAPAVKQA.

7 disordered regions span residues 1 to 40, 61 to 99, 119 to 156, 169 to 242, 256 to 312, 324 to 344, and 469 to 505; these read MLRG…CSAA, GAAN…DTAP, PAAA…SGGG, PLQQ…APTT, AQRL…SQDE, RRSA…NLSE, and PPPP…VKQA. Pro residues predominate over residues 23–33; the sequence is PLRPPPPPPFQ. Polar residues predominate over residues 131–144; the sequence is CSSSHGAVVPSTSA. Residues 174–199 show a composition bias toward low complexity; the sequence is PSGGETASASASAAATSTVPVESTVV. The segment covering 200–212 has biased composition (polar residues); sequence QAATNRLRSTPLF. Residues 222-239 show a composition bias toward pro residues; that stretch reads PPKPSPRAAAPPPPPPLA. Residues 288-299 show a composition bias toward basic and acidic residues; it reads GDRRQLNWRDSH. Over residues 300 to 310 the composition is skewed to polar residues; that stretch reads NNQSAEWSASQ. The span at 324–334 shows a compositional bias: basic residues; sequence RRSAARSSKRS. The span at 335 to 344 shows a compositional bias: basic and acidic residues; the sequence is RTAEVHNLSE. Residues 335-384 enclose the bHLH domain; the sequence is RTAEVHNLSERRRRDRINEKMRALQELIPNCNKIDKASMLEEAIEYLKTL. Over residues 492–505 the composition is skewed to low complexity; that stretch reads GAADAGNAPAVKQA.

It belongs to the bHLH protein family. As to quaternary structure, homodimer and heterodimer with ILI5 or ILI6.

Its subcellular location is the nucleus. Atypical bHLH transcription factor that acts as a negative regulator of grain size. Binds the transcription factor ILI6 and forms a heterodimer of antagonistic bHLH transcription factors that regulates grain length and weight by controlling cell elongation in lemma and palea. May be involved in the control of lamina inclination through brassinosteroid signaling pathway. The sequence is that of Transcription factor APG (APG) from Oryza sativa subsp. japonica (Rice).